The following is a 282-amino-acid chain: Dihydropteroate synthase (282 aa).

Residues Pro-15–Arg-267 form the Pterin-binding domain. Asn-22 lines the Mg(2+) pocket. (7,8-dihydropterin-6-yl)methyl diphosphate contacts are provided by residues Thr-62, Asp-96, Asn-115, Asp-185, Lys-221, and Arg-255–His-257.

The protein belongs to the DHPS family. Homodimer. Mg(2+) is required as a cofactor.

It carries out the reaction (7,8-dihydropterin-6-yl)methyl diphosphate + 4-aminobenzoate = 7,8-dihydropteroate + diphosphate. It functions in the pathway cofactor biosynthesis; tetrahydrofolate biosynthesis; 7,8-dihydrofolate from 2-amino-4-hydroxy-6-hydroxymethyl-7,8-dihydropteridine diphosphate and 4-aminobenzoate: step 1/2. Catalyzes the condensation of para-aminobenzoate (pABA) with 6-hydroxymethyl-7,8-dihydropterin diphosphate (DHPt-PP) to form 7,8-dihydropteroate (H2Pte), the immediate precursor of folate derivatives. The sequence is that of Dihydropteroate synthase (folP) from Shigella flexneri.